We begin with the raw amino-acid sequence, 518 residues long: UPF0053 inner membrane protein YoaE (518 aa).

Residues 1 to 13 (MEFLMDPSIWAGL) are Cytoplasmic-facing. Residues 14-34 (LTLVVLEIVLGIDNLVFIAIL) traverse the membrane as a helical segment. The Periplasmic segment spans residues 35–48 (ADKLPPKQRDKARL). A helical transmembrane segment spans residues 49-69 (LGLSLALIMRLGLLSLISWMV). Residues 70–78 (TLTKPLFTV) are Cytoplasmic-facing. A helical membrane pass occupies residues 79-99 (MDFSFSGRDLIMLFGGIFLLF). At 100 to 124 (KATTELHERLENRDHDSGHGKGYAS) the chain is on the periplasmic side. A helical membrane pass occupies residues 125–145 (FWVVVTQIVILDAVFSLDAVI). The Cytoplasmic portion of the chain corresponds to 146–149 (TAVG). Residues 150-170 (MVNHLPVMMAAVVIAMAVMLL) traverse the membrane as a helical segment. The Periplasmic portion of the chain corresponds to 171–184 (ASKPLTRFVNQHPT). A helical transmembrane segment spans residues 185–205 (VVVLCLSFLLMIGLSLVAEGF). Position 206 (glycine 206) is a topological domain, cytoplasmic. A helical membrane pass occupies residues 207-227 (FHIPKGYLYAAIGFSIIIEVF). Residues 228 to 354 (NQIARRNFIR…IGIVRAKELL (127 aa)) lie on the Periplasmic side of the membrane. CBS domains follow at residues 304–363 (MTPR…GVDV) and 367–427 (ASAS…DADE). A helical transmembrane segment spans residues 355-375 (VALEEGVDVAAIASASPAIIV). Residues 376 to 518 (PETLDPINLL…KEQPAHDEDE (143 aa)) lie on the Cytoplasmic side of the membrane.

It belongs to the UPF0053 family.

The protein localises to the cell inner membrane. In Escherichia coli O157:H7, this protein is UPF0053 inner membrane protein YoaE (yoaE).